The primary structure comprises 394 residues: Elongation factor Tu (394 aa).

One can recognise a tr-type G domain in the interval 10 to 204 (KPHVNVGTIG…YLDSYIPEPE (195 aa)). Residues 19–26 (GHVDHGKT) form a G1 region. 19–26 (GHVDHGKT) serves as a coordination point for GTP. T26 is a Mg(2+) binding site. A G2 region spans residues 60-64 (GITIN). The tract at residues 81–84 (DCPG) is G3. Residues 81–85 (DCPGH) and 136–139 (NKCD) each bind GTP. Residues 136-139 (NKCD) are G4. The segment at 174-176 (SAL) is G5.

It belongs to the TRAFAC class translation factor GTPase superfamily. Classic translation factor GTPase family. EF-Tu/EF-1A subfamily. As to quaternary structure, monomer.

The protein localises to the cytoplasm. The catalysed reaction is GTP + H2O = GDP + phosphate + H(+). GTP hydrolase that promotes the GTP-dependent binding of aminoacyl-tRNA to the A-site of ribosomes during protein biosynthesis. This chain is Elongation factor Tu, found in Pectobacterium atrosepticum (strain SCRI 1043 / ATCC BAA-672) (Erwinia carotovora subsp. atroseptica).